The chain runs to 434 residues: Enolase (434 aa).

Gln163 is a (2R)-2-phosphoglycerate binding site. Glu205 (proton donor) is an active-site residue. Residues Asp242, Glu291, and Asp318 each contribute to the Mg(2+) site. Positions 343, 372, 373, and 394 each coordinate (2R)-2-phosphoglycerate. The active-site Proton acceptor is Lys343.

Belongs to the enolase family. It depends on Mg(2+) as a cofactor.

It is found in the cytoplasm. Its subcellular location is the secreted. The protein resides in the cell surface. It carries out the reaction (2R)-2-phosphoglycerate = phosphoenolpyruvate + H2O. It participates in carbohydrate degradation; glycolysis; pyruvate from D-glyceraldehyde 3-phosphate: step 4/5. In terms of biological role, catalyzes the reversible conversion of 2-phosphoglycerate (2-PG) into phosphoenolpyruvate (PEP). It is essential for the degradation of carbohydrates via glycolysis. In Streptococcus gordonii (strain Challis / ATCC 35105 / BCRC 15272 / CH1 / DL1 / V288), this protein is Enolase.